A 378-amino-acid chain; its full sequence is Protein RecA (378 aa).

79–86 serves as a coordination point for ATP; sequence GPESSGKT.

The protein belongs to the RecA family.

It localises to the cytoplasm. Its function is as follows. Can catalyze the hydrolysis of ATP in the presence of single-stranded DNA, the ATP-dependent uptake of single-stranded DNA by duplex DNA, and the ATP-dependent hybridization of homologous single-stranded DNAs. It interacts with LexA causing its activation and leading to its autocatalytic cleavage. The polypeptide is Protein RecA (Streptococcus pyogenes serotype M28 (strain MGAS6180)).